Here is a 549-residue protein sequence, read N- to C-terminus: Urocanate hydratase (549 aa).

Residues 46–47 (GG), Gln-124, Glu-190, Arg-195, 236–237 (NA), 257–261 (QTSAH), 267–268 (YV), and Tyr-316 contribute to the NAD(+) site. Cys-404 is a catalytic residue. Gly-486 lines the NAD(+) pocket.

The protein belongs to the urocanase family. NAD(+) is required as a cofactor.

It localises to the cytoplasm. It catalyses the reaction 4-imidazolone-5-propanoate = trans-urocanate + H2O. It participates in amino-acid degradation; L-histidine degradation into L-glutamate; N-formimidoyl-L-glutamate from L-histidine: step 2/3. In terms of biological role, catalyzes the conversion of urocanate to 4-imidazolone-5-propionate. The chain is Urocanate hydratase from Thermoanaerobacter pseudethanolicus (strain ATCC 33223 / 39E) (Clostridium thermohydrosulfuricum).